The sequence spans 130 residues: Small ribosomal subunit protein uS8 (130 aa).

Belongs to the universal ribosomal protein uS8 family.

The polypeptide is Small ribosomal subunit protein uS8 (RPS22) (Candida glabrata (strain ATCC 2001 / BCRC 20586 / JCM 3761 / NBRC 0622 / NRRL Y-65 / CBS 138) (Yeast)).